The chain runs to 252 residues: Proteasome subunit alpha type-7-1B (252 aa).

This sequence belongs to the peptidase T1A family. In terms of assembly, the 26S proteasome consists of a 20S proteasome core and two 19S regulatory subunits. The 20S proteasome core is composed of 28 subunits that are arranged in four stacked rings, resulting in a barrel-shaped structure. The two end rings are each formed by seven alpha subunits, and the two central rings are each formed by seven beta subunits. The catalytic chamber with the active sites is on the inside of the barrel. Testis specific.

It is found in the cytoplasm. The protein localises to the nucleus. In terms of biological role, the proteasome is a multicatalytic proteinase complex which is characterized by its ability to cleave peptides with Arg, Phe, Tyr, Leu, and Glu adjacent to the leaving group at neutral or slightly basic pH. The proteasome has an ATP-dependent proteolytic activity. In Drosophila melanogaster (Fruit fly), this protein is Proteasome subunit alpha type-7-1B (Prosalpha4T2).